We begin with the raw amino-acid sequence, 125 residues long: NADH-ubiquinone oxidoreductase chain 1 (125 aa).

3 consecutive transmembrane segments (helical) span residues 5-25 (IFAF…VAFL), 74-94 (YLFF…WNFM), and 105-125 (LSLL…LGSG).

It belongs to the complex I subunit 1 family.

It localises to the mitochondrion inner membrane. The catalysed reaction is a ubiquinone + NADH + 5 H(+)(in) = a ubiquinol + NAD(+) + 4 H(+)(out). Its function is as follows. Core subunit of the mitochondrial membrane respiratory chain NADH dehydrogenase (Complex I) that is believed to belong to the minimal assembly required for catalysis. Complex I functions in the transfer of electrons from NADH to the respiratory chain. The immediate electron acceptor for the enzyme is believed to be ubiquinone. This chain is NADH-ubiquinone oxidoreductase chain 1 (ND1), found in Arbacia lixula (Black urchin).